The chain runs to 141 residues: Large ribosomal subunit protein uL11 (141 aa).

Belongs to the universal ribosomal protein uL11 family. As to quaternary structure, part of the ribosomal stalk of the 50S ribosomal subunit. Interacts with L10 and the large rRNA to form the base of the stalk. L10 forms an elongated spine to which L12 dimers bind in a sequential fashion forming a multimeric L10(L12)X complex. In terms of processing, one or more lysine residues are methylated.

Functionally, forms part of the ribosomal stalk which helps the ribosome interact with GTP-bound translation factors. The sequence is that of Large ribosomal subunit protein uL11 from Chlamydia abortus (strain DSM 27085 / S26/3) (Chlamydophila abortus).